Here is a 91-residue protein sequence, read N- to C-terminus: Cell division topological specificity factor (91 aa).

The protein belongs to the MinE family.

Its function is as follows. Prevents the cell division inhibition by proteins MinC and MinD at internal division sites while permitting inhibition at polar sites. This ensures cell division at the proper site by restricting the formation of a division septum at the midpoint of the long axis of the cell. The protein is Cell division topological specificity factor of Chloroflexus aurantiacus (strain ATCC 29366 / DSM 635 / J-10-fl).